The chain runs to 88 residues: Acyl-CoA-binding domain-containing protein 7 (88 aa).

An ACB domain is found at 3 to 88 (LQADFDKAAK…AKELIEKYGI (86 aa)). An acyl-CoA is bound by residues R15, 30–34 (YGLYK), K56, and Y75.

Belongs to the ACBD7 family.

Its function is as follows. Binds medium- and long-chain acyl-CoA esters. This Bos taurus (Bovine) protein is Acyl-CoA-binding domain-containing protein 7 (ACBD7).